Consider the following 158-residue polypeptide: NAD(P)H-quinone oxidoreductase subunit J, chloroplastic (158 aa).

Belongs to the complex I 30 kDa subunit family. In terms of assembly, NDH is composed of at least 16 different subunits, 5 of which are encoded in the nucleus.

It localises to the plastid. It is found in the chloroplast thylakoid membrane. The enzyme catalyses a plastoquinone + NADH + (n+1) H(+)(in) = a plastoquinol + NAD(+) + n H(+)(out). The catalysed reaction is a plastoquinone + NADPH + (n+1) H(+)(in) = a plastoquinol + NADP(+) + n H(+)(out). NDH shuttles electrons from NAD(P)H:plastoquinone, via FMN and iron-sulfur (Fe-S) centers, to quinones in the photosynthetic chain and possibly in a chloroplast respiratory chain. The immediate electron acceptor for the enzyme in this species is believed to be plastoquinone. Couples the redox reaction to proton translocation, and thus conserves the redox energy in a proton gradient. This is NAD(P)H-quinone oxidoreductase subunit J, chloroplastic from Spinacia oleracea (Spinach).